The following is a 129-amino-acid chain: Small ribosomal subunit protein uS11 (129 aa).

The disordered stretch occupies residues 107 to 129 (IEDVTPVPHDSIRGKGGRRGRRV).

It belongs to the universal ribosomal protein uS11 family. As to quaternary structure, part of the 30S ribosomal subunit.

Functionally, located on the platform of the 30S subunit. This chain is Small ribosomal subunit protein uS11, found in Methanoculleus marisnigri (strain ATCC 35101 / DSM 1498 / JR1).